Reading from the N-terminus, the 147-residue chain is Large ribosomal subunit protein bL9 (147 aa).

Belongs to the bacterial ribosomal protein bL9 family.

In terms of biological role, binds to the 23S rRNA. The chain is Large ribosomal subunit protein bL9 from Citrifermentans bemidjiense (strain ATCC BAA-1014 / DSM 16622 / JCM 12645 / Bem) (Geobacter bemidjiensis).